The chain runs to 344 residues: Sulfate/thiosulfate import ATP-binding protein CysA (344 aa).

Residues isoleucine 9–isoleucine 239 enclose the ABC transporter domain. Glycine 41–serine 48 contributes to the ATP binding site.

This sequence belongs to the ABC transporter superfamily. Sulfate/tungstate importer (TC 3.A.1.6) family. As to quaternary structure, the complex is composed of two ATP-binding proteins (CysA), two transmembrane proteins (CysT and CysW) and a solute-binding protein (CysP).

The protein resides in the cell inner membrane. The catalysed reaction is sulfate(out) + ATP + H2O = sulfate(in) + ADP + phosphate + H(+). It carries out the reaction thiosulfate(out) + ATP + H2O = thiosulfate(in) + ADP + phosphate + H(+). Functionally, part of the ABC transporter complex CysAWTP involved in sulfate/thiosulfate import. Responsible for energy coupling to the transport system. This chain is Sulfate/thiosulfate import ATP-binding protein CysA, found in Synechococcus elongatus (strain ATCC 33912 / PCC 7942 / FACHB-805) (Anacystis nidulans R2).